A 644-amino-acid chain; its full sequence is 3-isopropylmalate dehydratase (644 aa).

The [4Fe-4S] cluster site is built by cysteine 400, cysteine 460, and cysteine 463. Positions 521–568 (SEIPGTPKQSPRQEVVAEFESEEDDVDSSSVDSAPVATPPSTGDSAGM) are disordered. The segment covering 537–547 (AEFESEEDDVD) has biased composition (acidic residues).

It belongs to the aconitase/IPM isomerase family. In terms of assembly, monomer. [4Fe-4S] cluster is required as a cofactor.

It catalyses the reaction (2R,3S)-3-isopropylmalate = (2S)-2-isopropylmalate. It participates in amino-acid biosynthesis; L-leucine biosynthesis; L-leucine from 3-methyl-2-oxobutanoate: step 2/4. Catalyzes the isomerization between 2-isopropylmalate and 3-isopropylmalate, via the formation of 2-isopropylmaleate. This is 3-isopropylmalate dehydratase (LEUA) from Mucor circinelloides f. lusitanicus (Mucor racemosus var. lusitanicus).